Here is a 163-residue protein sequence, read N- to C-terminus: Neurotrophin-3 (163 aa).

Residues 1–3 form the signal peptide; the sequence is IQS. The propeptide occupies 4–119; the sequence is TSMDQGILTE…VLNRTSRRKR (116 aa). Asparagine 112 carries an N-linked (GlcNAc...) asparagine glycan. The segment at 112–132 is disordered; the sequence is NRTSRRKREGKSHRGEYSVCD. The span at 123 to 132 shows a compositional bias: basic and acidic residues; sequence SHRGEYSVCD.

It belongs to the NGF-beta family.

It is found in the secreted. Its function is as follows. Seems to promote the survival of visceral and proprioceptive sensory neurons. This is Neurotrophin-3 (NTF3) from Exiliboa placata (Oaxacan dwarf boa).